Consider the following 213-residue polypeptide: 5-oxoprolinase subunit B (213 aa).

This sequence belongs to the PxpB family. Forms a complex composed of PxpA, PxpB and PxpC.

The enzyme catalyses 5-oxo-L-proline + ATP + 2 H2O = L-glutamate + ADP + phosphate + H(+). Functionally, catalyzes the cleavage of 5-oxoproline to form L-glutamate coupled to the hydrolysis of ATP to ADP and inorganic phosphate. This is 5-oxoprolinase subunit B from Haemophilus influenzae (strain ATCC 51907 / DSM 11121 / KW20 / Rd).